Consider the following 243-residue polypeptide: tRNA pseudouridine synthase A (243 aa).

Aspartate 53 (nucleophile) is an active-site residue. Tyrosine 111 serves as a coordination point for substrate.

Belongs to the tRNA pseudouridine synthase TruA family. Homodimer.

It carries out the reaction uridine(38/39/40) in tRNA = pseudouridine(38/39/40) in tRNA. In terms of biological role, formation of pseudouridine at positions 38, 39 and 40 in the anticodon stem and loop of transfer RNAs. This chain is tRNA pseudouridine synthase A, found in Chlorobium phaeovibrioides (strain DSM 265 / 1930) (Prosthecochloris vibrioformis (strain DSM 265)).